The primary structure comprises 284 residues: 4-diphosphocytidyl-2-C-methyl-D-erythritol kinase (284 aa).

Residue K14 is part of the active site. 98–108 (PMGGGLGGGSS) is an ATP binding site. Residue D140 is part of the active site.

It belongs to the GHMP kinase family. IspE subfamily.

The enzyme catalyses 4-CDP-2-C-methyl-D-erythritol + ATP = 4-CDP-2-C-methyl-D-erythritol 2-phosphate + ADP + H(+). It functions in the pathway isoprenoid biosynthesis; isopentenyl diphosphate biosynthesis via DXP pathway; isopentenyl diphosphate from 1-deoxy-D-xylulose 5-phosphate: step 3/6. In terms of biological role, catalyzes the phosphorylation of the position 2 hydroxy group of 4-diphosphocytidyl-2C-methyl-D-erythritol. In Shewanella oneidensis (strain ATCC 700550 / JCM 31522 / CIP 106686 / LMG 19005 / NCIMB 14063 / MR-1), this protein is 4-diphosphocytidyl-2-C-methyl-D-erythritol kinase.